A 283-amino-acid polypeptide reads, in one-letter code: Plasma membrane ascorbate-dependent reductase CYBRD1 (283 aa).

Residues 1–5 are Cytoplasmic-facing; that stretch reads MEGYK. A helical transmembrane segment spans residues 6-30; sequence SFLAFLVSSLLLGFLGVIFTLVWVL. The Cytochrome b561 domain maps to 13–218; the sequence is SSLLLGFLGV…FGGLVVWMVT (206 aa). At 31-45 the chain is on the extracellular side; that stretch reads HWREGLGWDGGAAEF. The chain crosses the membrane as a helical span at residues 46 to 67; it reads NWHPVLVTSGFIFIQGIAIIVY. Heme b is bound by residues His48, Arg68, and Lys77. Residues 68–76 are Cytoplasmic-facing; sequence RLPWTWKCS. L-ascorbate is bound by residues Lys77 and Lys81. A helical transmembrane segment spans residues 77 to 103; it reads KLLMKFIHAGLHLTALIFTIVALVAVF. His84 provides a ligand contact to heme b. Topologically, residues 104-116 are extracellular; the sequence is DFHNAKNIPNMYS. His106 serves as a coordination point for Fe(3+). Heme b is bound by residues 113–116 and His118; that span reads NMYS. The helical transmembrane segment at 117-142 threads the bilayer; the sequence is LHSWIGLTVVILYALQLVLGVSIYLL. At 143-149 the chain is on the cytoplasmic side; it reads PFASNTL. Arg150 contributes to the L-ascorbate binding site. Residues 150-177 form a helical membrane-spanning segment; sequence RAALMPVHVYSGLFIFGTVIATALMGIT. 2 residues coordinate heme b: His157 and Glu178. Residues 178–195 lie on the Extracellular side of the membrane; the sequence is EKLIFSLKEPPYSKLPPE. Residues 196–220 form a helical membrane-spanning segment; that stretch reads AIFVNTFGLLILVFGGLVVWMVTTP. The Cytoplasmic segment spans residues 221–283; sequence AWKRPREQGM…LDEAGQRSTM (63 aa). Residue Lys223 participates in heme b binding. Residues 234–262 are disordered; the sequence is SPTVSSPDETEEGSTITDCSNTEKSDVEL. Polar residues predominate over residues 235-253; it reads PTVSSPDETEEGSTITDCS.

As to quaternary structure, homodimer. Heme b serves as cofactor.

The protein localises to the cell membrane. Its subcellular location is the apical cell membrane. The catalysed reaction is Fe(3+)(out) + L-ascorbate(in) = monodehydro-L-ascorbate radical(in) + Fe(2+)(out) + H(+). It carries out the reaction Cu(2+)(out) + L-ascorbate(in) = Cu(+)(out) + monodehydro-L-ascorbate radical(in) + H(+). The enzyme catalyses monodehydro-L-ascorbate radical(out) + L-ascorbate(in) = monodehydro-L-ascorbate radical(in) + L-ascorbate(out). Plasma membrane reductase that uses cytoplasmic ascorbate as an electron donor to reduce extracellular Fe(3+) into Fe(2+). It is also able to reduce extracellular monodehydro-L-ascorbate and may be involved in extracellular ascorbate regeneration. May also function as a cupric transmembrane reductase. The protein is Plasma membrane ascorbate-dependent reductase CYBRD1 (cybrd1) of Xenopus laevis (African clawed frog).